Here is a 1135-residue protein sequence, read N- to C-terminus: MQCSPDPEDLLIVPTHDIPSYDESLDPFGPEGHLSLDIDCFSKFMSRSDNRIMSKPIIVRGIPWRILAICRNQQGSRHSMNSRVNRSNFNFGFFLQCNNDELLQKRGMWRCYGTAVLEVLNADGPSIQKKIHHSFHNTEVDWGFSNYDQYDTLCNPKDGYVVNDTIKLRCRFTADVPTGANYMWDSKRHTGCIGLRNQGATCYMNSILQSFYFTTGFRRAVYNMDVGTEPNESNIVLAMQRVFYELQMASEAVETNSLTRAFGWDKLDAFNQHDVQEFCRVLLDNLETKMKGTSEEKSIPNLFRGNMKSYIKCLDVDYESSRTESFYDVQLNVLGMDSLERAFEAYTTSEILDDENKYDAGDHGLQRAEKGVKFVELPPILHVQLMRFQYCGVEQKINERFSFPEKMNLASCCELGPMLTEEDCVYSLHAVLVHSGEFHGGHYVTYINVNLHESAVDPTSSAKWCKFDDDVVSRTTTDDAIVSNFGGEKTMNSSAYMLVYVRDNAIDQFLAPIPDSQIPQSVSRTFEMERLHRNREKKKLEEEQLCMGIVLVTPDIVASNHSFDLVDQSIVHDSIPHETVWKHMFTAELYQFVHDRLFEKSAMQKIDMFDSDDEARQARRDNLRRIKSKKFNFRLWRMTDSYSLERTTQKLTSRLRPSEFIDCKTDTRLDTLLSQDFETIYVEFSNNIERPLCEYDTARDLLFFVKYYDTMTDKFTIIGHTMFDCHKRFNLYRSMLCEMIGLPADTELKYYMEHAASYLELVDLTQNYSIGRLVEEQDGGILVVEKVETSTSTQNAKQKMNELFLDVEVEFVQSFYNKKPEEEPFEQFVKRICLDDKLFTVAEEIGARLNVDPKKVLIWTRVSGSRFEPFFDDYMLNTCKGLMTRPVHDPRAYKRYRVQYAIMPFDIDEISKHRIQTKLFWQLPNGHVEELTLFPLKEGTVIDIINEAKRYYPFVEGGSGKFRLLQIGAPPLSNQRVYQIYGENTLISDLDQRTMYKLVSSQALHCRLEEVPIDELDMSPGEFLCPVVHFDREPTKLFGLSFVIKIRNNELMTEVRDRLRRKLNDVSDADFAKYKFALLSRDKLQLCRTIEFNNGEKVNLADMANQTTGVPQVYIGLDHKSPIQHSSEAAIRILN.

In terms of domain architecture, MATH spans 31 to 172 (EGHLSLDIDC…NDTIKLRCRF (142 aa)). One can recognise a USP domain in the interval 193–503 (IGLRNQGATC…SAYMLVYVRD (311 aa)). Residue C202 is the Nucleophile of the active site. The Proton acceptor role is filled by H442.

This sequence belongs to the peptidase C19 family.

It is found in the nucleus. The enzyme catalyses Thiol-dependent hydrolysis of ester, thioester, amide, peptide and isopeptide bonds formed by the C-terminal Gly of ubiquitin (a 76-residue protein attached to proteins as an intracellular targeting signal).. In terms of biological role, hydrolase that deubiquitinates target proteins. May play a role in regulating the levels of endogenous siRNA biogenesis. This Caenorhabditis elegans protein is Ubiquitin carboxyl-terminal hydrolase 7.